A 302-amino-acid chain; its full sequence is Oligopeptide transport system permease protein OppC (302 aa).

Over 1-38 (MMLSKKNSETLENFSEKLEVEGRSLWQDARRRFMHNRA) the chain is Cytoplasmic. A helical membrane pass occupies residues 39–59 (AVASLIVLVLIALFVILAPML). At 60 to 102 (SQFAYDDTDWAMMSSAPDMESGHYFGTDSSGRDLLVRVAIGGR) the chain is on the periplasmic side. In terms of domain architecture, ABC transmembrane type-1 spans 101-290 (GRISLMVGVA…VTLFCFNFIG (190 aa)). Residues 103 to 123 (ISLMVGVAAALVAVVVGTLYG) form a helical membrane-spanning segment. Residues 124–137 (SLSGYLGGKVDSVM) are Cytoplasmic-facing. The helical transmembrane segment at 138–160 (MRLLEILNSFPFMFFVILLVTFF) threads the bilayer. At 161 to 163 (GQN) the chain is on the periplasmic side. The helical transmembrane segment at 164–183 (ILLIFVAIGMVSWLDMARIV) threads the bilayer. Topologically, residues 184-213 (RGQTLSLKRKEFIEAAQVGGVSTSGIVIRH) are cytoplasmic. A helical membrane pass occupies residues 214-234 (IVPNVLGVVVVYASLLVPSMI). The Periplasmic segment spans residues 235-269 (LFESFLSFLGLGTQEPLSSWGALLSDGANSMEVSP). The helical transmembrane segment at 270 to 290 (WLLLFPAGFLVVTLFCFNFIG) threads the bilayer. Residues 291 to 302 (DGLRDALDPKDR) lie on the Cytoplasmic side of the membrane.

The protein belongs to the binding-protein-dependent transport system permease family. OppBC subfamily. As to quaternary structure, the complex is composed of two ATP-binding proteins (OppD and OppF), two transmembrane proteins (OppB and OppC) and a solute-binding protein (OppA).

The protein localises to the cell inner membrane. Its function is as follows. Part of the ABC transporter complex OppABCDF involved in the uptake of oligopeptides. Probably responsible for the translocation of the substrate across the membrane. The polypeptide is Oligopeptide transport system permease protein OppC (oppC) (Escherichia coli O157:H7).